The chain runs to 59 residues: Large ribosomal subunit protein uL30 (59 aa).

It belongs to the universal ribosomal protein uL30 family. In terms of assembly, part of the 50S ribosomal subunit.

In Geobacter sulfurreducens (strain ATCC 51573 / DSM 12127 / PCA), this protein is Large ribosomal subunit protein uL30.